We begin with the raw amino-acid sequence, 476 residues long: ATP synthase subunit beta, chloroplastic (476 aa).

Residue 155-162 participates in ATP binding; it reads GGAGVGKT.

Belongs to the ATPase alpha/beta chains family. As to quaternary structure, F-type ATPases have 2 components, CF(1) - the catalytic core - and CF(0) - the membrane proton channel. CF(1) has five subunits: alpha(3), beta(3), gamma(1), delta(1), epsilon(1). CF(0) has four main subunits: a(1), b(1), b'(1) and c(9-12).

It localises to the plastid. Its subcellular location is the chloroplast thylakoid membrane. It catalyses the reaction ATP + H2O + 4 H(+)(in) = ADP + phosphate + 5 H(+)(out). In terms of biological role, produces ATP from ADP in the presence of a proton gradient across the membrane. The catalytic sites are hosted primarily by the beta subunits. The protein is ATP synthase subunit beta, chloroplastic of Emiliania huxleyi (Coccolithophore).